The sequence spans 147 residues: 3-dehydroquinate dehydratase (147 aa).

The active-site Proton acceptor is the Tyr-23. Positions 74, 80, and 87 each coordinate substrate. His-100 acts as the Proton donor in catalysis. Substrate is bound by residues 101-102 (IS) and Arg-111.

This sequence belongs to the type-II 3-dehydroquinase family. Homododecamer.

The enzyme catalyses 3-dehydroquinate = 3-dehydroshikimate + H2O. It functions in the pathway metabolic intermediate biosynthesis; chorismate biosynthesis; chorismate from D-erythrose 4-phosphate and phosphoenolpyruvate: step 3/7. Catalyzes a trans-dehydration via an enolate intermediate. The protein is 3-dehydroquinate dehydratase of Prochlorococcus marinus (strain MIT 9301).